The following is a 314-amino-acid chain: tRNA uridine(34) hydroxylase (314 aa).

The 95-residue stretch at 140 to 234 (ARDDVILIDT…YLEETPPDES (95 aa)) folds into the Rhodanese domain. Cys-194 functions as the Cysteine persulfide intermediate in the catalytic mechanism.

It belongs to the TrhO family.

The enzyme catalyses uridine(34) in tRNA + AH2 + O2 = 5-hydroxyuridine(34) in tRNA + A + H2O. Functionally, catalyzes oxygen-dependent 5-hydroxyuridine (ho5U) modification at position 34 in tRNAs. This chain is tRNA uridine(34) hydroxylase, found in Acinetobacter baumannii (strain AYE).